The primary structure comprises 439 residues: uncharacterized protein (439 aa).

Residues 273–439 enclose the VWFA domain; the sequence is PIIILLDHSG…EARKIYKSIS (167 aa).

This is an uncharacterized protein from Methanocaldococcus jannaschii (strain ATCC 43067 / DSM 2661 / JAL-1 / JCM 10045 / NBRC 100440) (Methanococcus jannaschii).